A 175-amino-acid chain; its full sequence is Adenine phosphoribosyltransferase (175 aa).

This sequence belongs to the purine/pyrimidine phosphoribosyltransferase family. As to quaternary structure, homodimer.

It is found in the cytoplasm. The catalysed reaction is AMP + diphosphate = 5-phospho-alpha-D-ribose 1-diphosphate + adenine. It functions in the pathway purine metabolism; AMP biosynthesis via salvage pathway; AMP from adenine: step 1/1. Catalyzes a salvage reaction resulting in the formation of AMP, that is energically less costly than de novo synthesis. The sequence is that of Adenine phosphoribosyltransferase from Lactobacillus johnsonii (strain CNCM I-12250 / La1 / NCC 533).